We begin with the raw amino-acid sequence, 305 residues long: Thioredoxin reductase (305 aa).

An FAD-binding site is contributed by Leu-28 to Gln-35. Cys-129 and Cys-132 are joined by a disulfide. Residue Asp-272–Ala-281 participates in FAD binding.

This sequence belongs to the class-II pyridine nucleotide-disulfide oxidoreductase family. Homodimer. The cofactor is FAD.

It is found in the cytoplasm. The catalysed reaction is [thioredoxin]-dithiol + NADP(+) = [thioredoxin]-disulfide + NADPH + H(+). In Spironucleus barkhanus, this protein is Thioredoxin reductase (TRXB).